Consider the following 593-residue polypeptide: MAPDTCCCSATALRRRLPVLAWVPDYSLQWLRLDFIAGLSVGLTVIPQALAYAEVAGLPPQYGLYSAFMGCFVYFFLGTSRDVTLGPTAIMSLLVSFYTFREPAYAVLLAFLSGCIQLAMGLLHLGFLLDFISCPVIKGFTSAASITIGFGQIKNLLGLQKIPRQFFLQVYHTFLHIGETRVGDAVLGLASMLLLLVLKCMREHMPPPHPEMPLAVKFSRGLVWTVTTARNALVVSSAALIAYAFEVTGSHPFVLTGKIAEGLPPVRIPPFSVTRDNKTISFSEMVQDMGAGLAVVPLMGLLESIAVAKSFASQNNYRIDANQELLAIGLTNVLGSLVSSYPVTGSFGRTAVNAQTGVCTPAGGLVTGALVLLSLNYLTSLFSYIPKSALAAVIITAVTPLFDVKIFRSLWRVQRLDLLPLCVTFLLSFWEIQYGILAGSLVSLLILLHSVARPKTQVSEGQIFVLQPASGLYFPAIDALREAITNRALEASPPRSAVLECTHISSVDYTVIVGLGELLEDFQKKGVALAFVGLQVPVLRTLLAADLKGFRYFTTLEEAEKFLQQEPGTEPNSIHEDAVPEQRSSLLKSPSGP.

At 1 to 34 (MAPDTCCCSATALRRRLPVLAWVPDYSLQWLRLD) the chain is on the extracellular side. Residues 35–55 (FIAGLSVGLTVIPQALAYAEV) traverse the membrane as a helical segment. A topological domain (cytoplasmic) is located at residue Ala-56. Residues 57–77 (GLPPQYGLYSAFMGCFVYFFL) traverse the membrane as a helical segment. The Extracellular segment spans residues 78-82 (GTSRD). The chain crosses the membrane as a helical span at residues 83–100 (VTLGPTAIMSLLVSFYTF). Residues 101 to 106 (REPAYA) lie on the Cytoplasmic side of the membrane. A helical transmembrane segment spans residues 107–127 (VLLAFLSGCIQLAMGLLHLGF). Residues 128 to 176 (LLDFISCPVIKGFTSAASITIGFGQIKNLLGLQKIPRQFFLQVYHTFLH) lie on the Extracellular side of the membrane. The chain crosses the membrane as a helical span at residues 177 to 197 (IGETRVGDAVLGLASMLLLLV). Residues 198–233 (LKCMREHMPPPHPEMPLAVKFSRGLVWTVTTARNAL) lie on the Cytoplasmic side of the membrane. Residues 234-254 (VVSSAALIAYAFEVTGSHPFV) form a helical membrane-spanning segment. Topologically, residues 255–287 (LTGKIAEGLPPVRIPPFSVTRDNKTISFSEMVQ) are extracellular. A helical membrane pass occupies residues 288-308 (DMGAGLAVVPLMGLLESIAVA). Residues 309-324 (KSFASQNNYRIDANQE) lie on the Cytoplasmic side of the membrane. The helical transmembrane segment at 325–345 (LLAIGLTNVLGSLVSSYPVTG) threads the bilayer. Residues 346 to 361 (SFGRTAVNAQTGVCTP) are Extracellular-facing. A helical transmembrane segment spans residues 362-382 (AGGLVTGALVLLSLNYLTSLF). A topological domain (cytoplasmic) is located at residue Ser-383. The chain crosses the membrane as a helical span at residues 384 to 404 (YIPKSALAAVIITAVTPLFDV). Topologically, residues 405–417 (KIFRSLWRVQRLD) are extracellular. Residues 418 to 438 (LLPLCVTFLLSFWEIQYGILA) form a helical membrane-spanning segment. Residues 439–593 (GSLVSLLILL…SSLLKSPSGP (155 aa)) are Cytoplasmic-facing. Positions 453-566 (RPKTQVSEGQ…EEAEKFLQQE (114 aa)) constitute an STAS domain. The segment at 564-593 (QQEPGTEPNSIHEDAVPEQRSSLLKSPSGP) is disordered. Over residues 582 to 593 (QRSSLLKSPSGP) the composition is skewed to polar residues.

It belongs to the SLC26A/SulP transporter (TC 2.A.53) family. As to expression, abundantly expressed in the cerebellum, with a predominant expression in Purkinje cells (at protein level). In terms of tissue distribution, predominantly expressed in the kidney and brain. In the kidney localizes in collecting duct intercalated cells (at protein level). Predominantly expressed in the brain with lower levels in the kidney.

It is found in the cell membrane. The protein localises to the lysosome membrane. The protein resides in the apical cell membrane. Its subcellular location is the basolateral cell membrane. The enzyme catalyses hydrogencarbonate(in) + chloride(out) = hydrogencarbonate(out) + chloride(in). It catalyses the reaction sulfate(in) + H(+)(in) = sulfate(out) + H(+)(out). It carries out the reaction oxalate(in) + chloride(out) = oxalate(out) + chloride(in). In terms of biological role, sodium-independent anion exchanger mediating bicarbonate, chloride, sulfate and oxalate transport. Exhibits sodium-independent sulfate anion transporter activity that may cooperate with SLC26A2 to mediate DIDS-sensitive sulfate uptake into high endothelial venules endothelial cells (HEVEC). In the kidney, mediates chloride-bicarbonate exchange, facilitating V-ATPase-mediated acid secretion. May function as a chloride channel, playing an important role in moderating chloride homeostasis and neuronal activity in the cerebellum. The sequence is that of Sodium-independent sulfate anion transporter from Mus musculus (Mouse).